The primary structure comprises 330 residues: tRNA U34 carboxymethyltransferase (330 aa).

Residues lysine 91, tryptophan 105, lysine 110, glycine 130, 152–154 (DPS), 181–182 (IE), methionine 196, tyrosine 200, and arginine 315 contribute to the carboxy-S-adenosyl-L-methionine site.

This sequence belongs to the class I-like SAM-binding methyltransferase superfamily. CmoB family. Homotetramer.

It catalyses the reaction carboxy-S-adenosyl-L-methionine + 5-hydroxyuridine(34) in tRNA = 5-carboxymethoxyuridine(34) in tRNA + S-adenosyl-L-homocysteine + H(+). Catalyzes carboxymethyl transfer from carboxy-S-adenosyl-L-methionine (Cx-SAM) to 5-hydroxyuridine (ho5U) to form 5-carboxymethoxyuridine (cmo5U) at position 34 in tRNAs. The protein is tRNA U34 carboxymethyltransferase of Shewanella sp. (strain ANA-3).